Here is a 336-residue protein sequence, read N- to C-terminus: 4-hydroxy-3-methylbut-2-enyl diphosphate reductase (336 aa).

Residues 1–23 (MFGQRLDTLGAMSSSVSSPSPET) are disordered. Cys36 lines the [4Fe-4S] cluster pocket. (2E)-4-hydroxy-3-methylbut-2-enyl diphosphate contacts are provided by His65 and His98. His65 and His98 together coordinate dimethylallyl diphosphate. Positions 65 and 98 each coordinate isopentenyl diphosphate. Cys120 is a binding site for [4Fe-4S] cluster. His148 lines the (2E)-4-hydroxy-3-methylbut-2-enyl diphosphate pocket. His148 serves as a coordination point for dimethylallyl diphosphate. Position 148 (His148) interacts with isopentenyl diphosphate. Glu150 serves as the catalytic Proton donor. Thr190 contacts (2E)-4-hydroxy-3-methylbut-2-enyl diphosphate. Position 220 (Cys220) interacts with [4Fe-4S] cluster. (2E)-4-hydroxy-3-methylbut-2-enyl diphosphate-binding residues include Ser248, Ser249, Asn250, and Ser293. 4 residues coordinate dimethylallyl diphosphate: Ser248, Ser249, Asn250, and Ser293. Ser248, Ser249, Asn250, and Ser293 together coordinate isopentenyl diphosphate.

It belongs to the IspH family. [4Fe-4S] cluster is required as a cofactor.

It carries out the reaction isopentenyl diphosphate + 2 oxidized [2Fe-2S]-[ferredoxin] + H2O = (2E)-4-hydroxy-3-methylbut-2-enyl diphosphate + 2 reduced [2Fe-2S]-[ferredoxin] + 2 H(+). The catalysed reaction is dimethylallyl diphosphate + 2 oxidized [2Fe-2S]-[ferredoxin] + H2O = (2E)-4-hydroxy-3-methylbut-2-enyl diphosphate + 2 reduced [2Fe-2S]-[ferredoxin] + 2 H(+). It participates in isoprenoid biosynthesis; dimethylallyl diphosphate biosynthesis; dimethylallyl diphosphate from (2E)-4-hydroxy-3-methylbutenyl diphosphate: step 1/1. Its pathway is isoprenoid biosynthesis; isopentenyl diphosphate biosynthesis via DXP pathway; isopentenyl diphosphate from 1-deoxy-D-xylulose 5-phosphate: step 6/6. Its function is as follows. Catalyzes the conversion of 1-hydroxy-2-methyl-2-(E)-butenyl 4-diphosphate (HMBPP) into a mixture of isopentenyl diphosphate (IPP) and dimethylallyl diphosphate (DMAPP). Acts in the terminal step of the DOXP/MEP pathway for isoprenoid precursor biosynthesis. The protein is 4-hydroxy-3-methylbut-2-enyl diphosphate reductase of Corynebacterium efficiens (strain DSM 44549 / YS-314 / AJ 12310 / JCM 11189 / NBRC 100395).